Here is a 332-residue protein sequence, read N- to C-terminus: Geranylgeranyl pyrophosphate synthase dpasD (332 aa).

Isopentenyl diphosphate is bound by residues lysine 55, arginine 58, and histidine 87. The Mg(2+) site is built by aspartate 94 and aspartate 98. A dimethylallyl diphosphate-binding site is contributed by arginine 103. Arginine 104 contributes to the isopentenyl diphosphate binding site. Dimethylallyl diphosphate is bound by residues lysine 181, threonine 182, and glutamine 215. A Mg(2+)-binding site is contributed by aspartate 218. Dimethylallyl diphosphate is bound by residues asparagine 222, lysine 232, and lysine 242.

It belongs to the FPP/GGPP synthase family. The cofactor is Mg(2+).

It carries out the reaction isopentenyl diphosphate + dimethylallyl diphosphate = (2E)-geranyl diphosphate + diphosphate. The enzyme catalyses isopentenyl diphosphate + (2E)-geranyl diphosphate = (2E,6E)-farnesyl diphosphate + diphosphate. The catalysed reaction is isopentenyl diphosphate + (2E,6E)-farnesyl diphosphate = (2E,6E,10E)-geranylgeranyl diphosphate + diphosphate. Its pathway is secondary metabolite biosynthesis; terpenoid biosynthesis. Geranylgeranyl pyrophosphate synthase; part of the gene cluster that mediates the biosynthesis of the diterpenoid pyrones subglutinols A and B. The first step of the pathway is the synthesis of the alpha-pyrone moiety by the polyketide synthase dpasA via condensation of one acetyl-CoA starter unit with 3 malonyl-CoA units and 2 methylations. The alpha-pyrone is then combined with geranylgeranyl pyrophosphate (GGPP) formed by the GGPP synthase dpasD through the action of the prenyltransferase dpasC to yield a linear alpha-pyrone diterpenoid. Subsequent steps in the diterpenoid pyrone biosynthetic pathway involve the decalin core formation, which is initiated by the epoxidation of the C10-C11 olefin by the FAD-dependent oxidoreductase dpasE, and is followed by a cyclization cascade catalyzed by the terpene cyclase dpasB. The FAD-linked oxidoreductase dpasF is then involved in tetrahydrofuran (THF) ring formation at the C5 unit to complete the formation of subglutinols A and B. DpasF also possesses an additional catalytic ability of multi-step oxidations to generate a new DDP analog with an enone system at the C5 named FDDP A. The protein is Geranylgeranyl pyrophosphate synthase dpasD of Apiospora sacchari (Arthrinium sacchari).